Here is a 362-residue protein sequence, read N- to C-terminus: Aminomethyltransferase (362 aa).

Belongs to the GcvT family. The glycine cleavage system is composed of four proteins: P, T, L and H.

The catalysed reaction is N(6)-[(R)-S(8)-aminomethyldihydrolipoyl]-L-lysyl-[protein] + (6S)-5,6,7,8-tetrahydrofolate = N(6)-[(R)-dihydrolipoyl]-L-lysyl-[protein] + (6R)-5,10-methylene-5,6,7,8-tetrahydrofolate + NH4(+). Its function is as follows. The glycine cleavage system catalyzes the degradation of glycine. The protein is Aminomethyltransferase of Colwellia psychrerythraea (strain 34H / ATCC BAA-681) (Vibrio psychroerythus).